Reading from the N-terminus, the 101-residue chain is Urease subunit beta (101 aa).

This sequence belongs to the urease beta subunit family. As to quaternary structure, heterotrimer of UreA (gamma), UreB (beta) and UreC (alpha) subunits. Three heterotrimers associate to form the active enzyme.

The protein resides in the cytoplasm. It catalyses the reaction urea + 2 H2O + H(+) = hydrogencarbonate + 2 NH4(+). The protein operates within nitrogen metabolism; urea degradation; CO(2) and NH(3) from urea (urease route): step 1/1. This Pseudomonas fluorescens (strain ATCC BAA-477 / NRRL B-23932 / Pf-5) protein is Urease subunit beta.